The chain runs to 230 residues: 5'-methylthioadenosine/S-adenosylhomocysteine nucleosidase (230 aa).

Catalysis depends on Glu12, which acts as the Proton acceptor. Substrate is bound by residues Gly78, Ile153, and 174–175 (ME). Catalysis depends on Asp198, which acts as the Proton donor.

This sequence belongs to the PNP/UDP phosphorylase family. MtnN subfamily.

It catalyses the reaction S-adenosyl-L-homocysteine + H2O = S-(5-deoxy-D-ribos-5-yl)-L-homocysteine + adenine. It carries out the reaction S-methyl-5'-thioadenosine + H2O = 5-(methylsulfanyl)-D-ribose + adenine. The enzyme catalyses 5'-deoxyadenosine + H2O = 5-deoxy-D-ribose + adenine. The protein operates within amino-acid biosynthesis; L-methionine biosynthesis via salvage pathway; S-methyl-5-thio-alpha-D-ribose 1-phosphate from S-methyl-5'-thioadenosine (hydrolase route): step 1/2. Catalyzes the irreversible cleavage of the glycosidic bond in both 5'-methylthioadenosine (MTA) and S-adenosylhomocysteine (SAH/AdoHcy) to adenine and the corresponding thioribose, 5'-methylthioribose and S-ribosylhomocysteine, respectively. Also cleaves 5'-deoxyadenosine, a toxic by-product of radical S-adenosylmethionine (SAM) enzymes, into 5-deoxyribose and adenine. The chain is 5'-methylthioadenosine/S-adenosylhomocysteine nucleosidase from Shewanella piezotolerans (strain WP3 / JCM 13877).